The following is a 339-amino-acid chain: 2-deoxy-scyllo-inosamine dehydrogenase (339 aa).

Zn(2+) is bound by residues Cys37, His59, Cys88, Cys91, Cys94, Cys102, and Glu143.

This sequence belongs to the zinc-containing alcohol dehydrogenase family. DOIA dehydrogenase subfamily. Zn(2+) serves as cofactor.

It carries out the reaction 2-deoxy-scyllo-inosamine + NADP(+) = 3-amino-2,3-dideoxy-scyllo-inosose + NADPH + H(+). The enzyme catalyses 2-deoxy-scyllo-inosamine + NAD(+) = 3-amino-2,3-dideoxy-scyllo-inosose + NADH + H(+). It participates in metabolic intermediate biosynthesis; 2-deoxystreptamine biosynthesis; 2-deoxystreptamine from D-glucose 6-phosphate: step 3/4. The protein operates within antibiotic biosynthesis; tobramycin biosynthesis. In terms of biological role, catalyzes the oxidation of 2-deoxy-scyllo-inosamine (DOIA) with NAD(+) or NADP(+), forming 3-amino-2,3-dideoxy-scyllo-inosose (amino-DOI). The sequence is that of 2-deoxy-scyllo-inosamine dehydrogenase (tobE) from Streptoalloteichus tenebrarius (strain ATCC 17920 / DSM 40477 / JCM 4838 / CBS 697.72 / NBRC 16177 / NCIMB 11028 / NRRL B-12390 / A12253. 1 / ISP 5477) (Streptomyces tenebrarius).